A 170-amino-acid chain; its full sequence is Shikimate kinase (170 aa).

An ATP-binding site is contributed by 11-16 (GAGKTT). Mg(2+) is bound at residue T15. Substrate is bound by residues D33, R57, and G80. Residue R119 participates in ATP binding. Residue R141 coordinates substrate.

Belongs to the shikimate kinase family. As to quaternary structure, monomer. Mg(2+) is required as a cofactor.

Its subcellular location is the cytoplasm. It carries out the reaction shikimate + ATP = 3-phosphoshikimate + ADP + H(+). The protein operates within metabolic intermediate biosynthesis; chorismate biosynthesis; chorismate from D-erythrose 4-phosphate and phosphoenolpyruvate: step 5/7. Catalyzes the specific phosphorylation of the 3-hydroxyl group of shikimic acid using ATP as a cosubstrate. The protein is Shikimate kinase of Azobacteroides pseudotrichonymphae genomovar. CFP2.